The primary structure comprises 294 residues: tRNA dimethylallyltransferase (294 aa).

10–17 (GPTAVGKT) is an ATP binding site. Residue 12–17 (TAVGKT) participates in substrate binding. An interaction with substrate tRNA region spans residues 35 to 38 (DSQQ).

It belongs to the IPP transferase family. As to quaternary structure, monomer. It depends on Mg(2+) as a cofactor.

It carries out the reaction adenosine(37) in tRNA + dimethylallyl diphosphate = N(6)-dimethylallyladenosine(37) in tRNA + diphosphate. Functionally, catalyzes the transfer of a dimethylallyl group onto the adenine at position 37 in tRNAs that read codons beginning with uridine, leading to the formation of N6-(dimethylallyl)adenosine (i(6)A). This Streptococcus pneumoniae serotype 19F (strain G54) protein is tRNA dimethylallyltransferase.